A 253-amino-acid chain; its full sequence is Geranylgeranylglyceryl phosphate synthase (253 aa).

The Mg(2+) site is built by aspartate 23 and serine 52. Sn-glycerol 1-phosphate-binding positions include 171–177 (YFEAGSG), 202–203 (GG), and 224–225 (GT).

The protein belongs to the GGGP/HepGP synthase family. Group II subfamily. In terms of assembly, homodimer. It depends on Mg(2+) as a cofactor.

The protein resides in the cytoplasm. It catalyses the reaction sn-glycerol 1-phosphate + (2E,6E,10E)-geranylgeranyl diphosphate = sn-3-O-(geranylgeranyl)glycerol 1-phosphate + diphosphate. It functions in the pathway membrane lipid metabolism; glycerophospholipid metabolism. Its activity is regulated as follows. Inhibited by high concentrations of magnesium (&gt;10 mM) and by EDTA in vitro. In terms of biological role, prenyltransferase that catalyzes the transfer of the geranylgeranyl moiety of geranylgeranyl diphosphate (GGPP) to the C3 hydroxyl of sn-glycerol-1-phosphate (G1P). This reaction is the first ether-bond-formation step in the biosynthesis of archaeal membrane lipids. Cannot use sn-glycerol-3-phosphate (G3P) as substrate. The polypeptide is Geranylgeranylglyceryl phosphate synthase (Thermoplasma acidophilum (strain ATCC 25905 / DSM 1728 / JCM 9062 / NBRC 15155 / AMRC-C165)).